A 403-amino-acid polypeptide reads, in one-letter code: tRNA(Met) cytidine acetate ligase (403 aa).

Residues 7 to 20, G101, N164, and 189 to 190 each bind ATP; these read VVEYNPFHNGHAYH and RI.

This sequence belongs to the TmcAL family.

The protein localises to the cytoplasm. The enzyme catalyses cytidine(34) in elongator tRNA(Met) + acetate + ATP = N(4)-acetylcytidine(34) in elongator tRNA(Met) + AMP + diphosphate. Functionally, catalyzes the formation of N(4)-acetylcytidine (ac(4)C) at the wobble position of elongator tRNA(Met), using acetate and ATP as substrates. First activates an acetate ion to form acetyladenylate (Ac-AMP) and then transfers the acetyl group to tRNA to form ac(4)C34. This Lysinibacillus sphaericus (strain C3-41) protein is tRNA(Met) cytidine acetate ligase.